Consider the following 367-residue polypeptide: MASEMNASPEYTGYRLEVFIAVFTPLTIIAVALRFYARSLTSKKIDSGDWLIIAALVGQIVAGGIAIGAVKQAGVGHHAAYLAETNPETLVAFFKYLVAMSTWYATTEGLAKLAVCILYKRLFPQRGIHMVINTTMLVLVGASVGGGLADLFGCTPFSAHWGTAEEQAAHCIDTEALFVWGSFPNIVTDVVLLVLPMPIVWGLHASVRLRLVLVLTFLFGSIFGELIGGDSGLITSVLRFIAFYNKSSFIDPTFHAVELIIWTVCEPGVYLIAACLLVYRPLLEKIGIPLVGGVSSRGGNRQEPTELAFQKPSRPRNGAVIKSIGSGSISESGFEYIGDDDQRPLRRQGGITATTNVEVTWAAGSAV.

The next 3 helical transmembrane spans lie at 16 to 36 (LEVF…LRFY), 50 to 70 (WLII…IGAV), and 90 to 110 (LVAF…TEGL). The N-linked (GlcNAc...) asparagine glycan is linked to Asn133. Helical transmembrane passes span 137–157 (LVLV…CTPF), 183–203 (FPNI…VWGL), and 211–231 (LVLV…GGDS). The N-linked (GlcNAc...) asparagine glycan is linked to Asn245. The helical transmembrane segment at 259–279 (LIIWTVCEPGVYLIAACLLVY) threads the bilayer.

Belongs to the SAT4 family.

Its subcellular location is the membrane. It participates in secondary metabolite biosynthesis. Its function is as follows. Part of the gene cluster that mediates the biosynthesis of (2Z,4E,6E,10E)-9-hydroxydodeca-2,4,6,10-tetraenoic acid (BAA), (2E,4E,6E,10E)-9-hydroxydodeca-2,4,6,10-tetraenoic acid (BAB), and (2Z,4E,6E)-octa-2,4,6-trienedioic acid (PBA). The highly reducing polyketide synthase Ba17a is sufficent to produce PBA and BAA. The still to be characterized protein Ba17b leads to an increased production of BAA as well as to the production of the new compound BAB. BAA does not possess insecticidal activity against G.mellonella larvae, however, both BAA and BAB increase the growth of Candida albicans and BAA can mitigate the fungicidal effects of fluconazole over C.albicans, suggesting that generalist pathogens such as M.anisopliae, can potentially manipulate the yeast microbiota found in arthropods (and anywhere else) by the activity of compounds as BAA and BAB. The chain is Polyenoic acids biosynthesis gene cluster protein Ba17b from Metarhizium anisopliae (Entomophthora anisopliae).